The chain runs to 525 residues: MTKNIHKHRILILDFGSQYTQLLARRVREIGVYCELWAWDVTEAQIREFNPSGIILSGSPESTIENGSPRAPDYVFTAGVPVLGVCYGMQTMAIQLGGKVESSNQREFGYAQVEIKADSALIRDIKDAINPAGEAVLDVWMSHGDKVAEIPADFVTVASTDTCPFAIMANEEKRFYGVQFHPEVTHTKQGLRLLERFVLGICGCEALWTSATIIEDAIVRLREQIGDDHVILGLSGGVDSSVTAMLLHRAIGKRLTCVFVDNGLLRLNEADQVLEMFGDKFGLNIVHVAAEDRFLSALTGVDEPEAKRKIIGRVFVELFDEEACKQEQVKWLAQGTIYPDVIESAASATGKAHVIKSHHNVGGLPKEMKLGLVEPLKELFKDEVRKIGLELGLPYDMLYRHPFPGPGLGVRVLGEVKKEYCDLLRRADAIFIEELHKADLYNKVSQAFTVFLPVRSVGVMGDGRKYDWVVSLRAVETVDFMTAHWAHLPYDFLGRVSNRIINEVNGISRVVYDISGKPPATIEWE.

Residues R9 to L207 enclose the Glutamine amidotransferase type-1 domain. C86 (nucleophile) is an active-site residue. Active-site residues include H181 and E183. The GMPS ATP-PPase domain occupies W208–R400. An ATP-binding site is contributed by S235–S241.

In terms of assembly, homodimer.

The catalysed reaction is XMP + L-glutamine + ATP + H2O = GMP + L-glutamate + AMP + diphosphate + 2 H(+). Its pathway is purine metabolism; GMP biosynthesis; GMP from XMP (L-Gln route): step 1/1. Functionally, catalyzes the synthesis of GMP from XMP. The protein is GMP synthase [glutamine-hydrolyzing] of Yersinia pestis bv. Antiqua (strain Antiqua).